Here is a 505-residue protein sequence, read N- to C-terminus: Xylose import ATP-binding protein XylG (505 aa).

ABC transporter domains are found at residues L6 to E243 and V262 to K505. G38–S45 contributes to the ATP binding site.

Belongs to the ABC transporter superfamily. Xylose importer (TC 3.A.1.2.4) family. The complex is composed of two ATP-binding proteins (XylG), two transmembrane proteins (XylH) and a solute-binding protein (XylF).

It is found in the cell membrane. It catalyses the reaction D-xylose(out) + ATP + H2O = D-xylose(in) + ADP + phosphate + H(+). Functionally, part of the ABC transporter complex XylFGH involved in xylose import. Responsible for energy coupling to the transport system. This chain is Xylose import ATP-binding protein XylG, found in Thermoanaerobacter pseudethanolicus (strain ATCC 33223 / 39E) (Clostridium thermohydrosulfuricum).